The following is a 506-amino-acid chain: Trans-cinnamate 4-monooxygenase (506 aa).

A helical membrane pass occupies residues 3–23 (LLLLEKTLIGLFLAAVVAIAV). (E)-cinnamate is bound by residues 213-218 (RSRLAQ) and A307. C448 lines the heme pocket.

This sequence belongs to the cytochrome P450 family. It depends on heme as a cofactor.

Its subcellular location is the membrane. The catalysed reaction is (E)-cinnamate + reduced [NADPH--hemoprotein reductase] + O2 = (E)-4-coumarate + oxidized [NADPH--hemoprotein reductase] + H2O + H(+). Its pathway is phenylpropanoid metabolism; trans-4-coumarate biosynthesis; trans-4-coumarate from trans-cinnamate: step 1/1. In terms of biological role, catalyzes the first oxidative step of the phenylpropanoid pathway in higher plants by transforming trans-cinnamate into p-coumarate. The compounds formed by this pathway are essential components for lignification, pollination, and defense against ultraviolet light, predators and pathogens. The polypeptide is Trans-cinnamate 4-monooxygenase (CYP73A11) (Glycine max (Soybean)).